The sequence spans 260 residues: Late transcription factor 1 (260 aa).

This sequence belongs to the chordopoxvirinae VLTF-1 family. In terms of assembly, interacts with the late transcription factors VLTF-2 and VLTF-3. Interacts with the late transcription elongation factor VLTF-4. Interacts with itself.

Associates with RNA polymerase to initiate transcription from late gene promoters. The chain is Late transcription factor 1 (OPG093) from Homo sapiens (Human).